We begin with the raw amino-acid sequence, 219 residues long: Urease accessory protein UreG (219 aa).

The tract at residues 1-20 (MSALHSIPHRSKKLPPLRVG) is disordered. 23 to 30 (GPVGSGKT) is a GTP binding site.

The protein belongs to the SIMIBI class G3E GTPase family. UreG subfamily. As to quaternary structure, homodimer. UreD, UreF and UreG form a complex that acts as a GTP-hydrolysis-dependent molecular chaperone, activating the urease apoprotein by helping to assemble the nickel containing metallocenter of UreC. The UreE protein probably delivers the nickel.

Its subcellular location is the cytoplasm. Functionally, facilitates the functional incorporation of the urease nickel metallocenter. This process requires GTP hydrolysis, probably effectuated by UreG. The polypeptide is Urease accessory protein UreG (Methylibium petroleiphilum (strain ATCC BAA-1232 / LMG 22953 / PM1)).